The primary structure comprises 314 residues: Olfactory receptor 1Q1 (314 aa).

Over 1-25 the chain is Extracellular; it reads MDNSNWTSVSHFVLLGISTHPEEQI. N-linked (GlcNAc...) asparagine glycosylation is present at Asn5. The chain crosses the membrane as a helical span at residues 26 to 49; that stretch reads PLFLVFSLMYAINISGNLAIITLI. Residues 50 to 57 lie on the Cytoplasmic side of the membrane; it reads LSAPRLHI. A helical membrane pass occupies residues 58–79; it reads PMYIFLSNLALTDICFTSTTVP. At 80–100 the chain is on the extracellular side; that stretch reads KMLQIIFSPTKVISYTGCLAQ. Residues Cys97 and Cys189 are joined by a disulfide bond. The helical transmembrane segment at 101 to 120 threads the bilayer; the sequence is TYFFICFAVMENFILAVMAY. Residues 121 to 139 are Cytoplasmic-facing; the sequence is DRYIAICHPFHYTMILTRM. Residues 140 to 158 form a helical membrane-spanning segment; the sequence is LCVKMVVMCHALSHLHAML. Residues 159-195 are Extracellular-facing; the sequence is HTFLIGQLIFCADNRIPHFFCDLYALMKISCTSTYLN. Residues 196–219 form a helical membrane-spanning segment; it reads TLMIHTEGAVVISGALAFITASYA. Residues 220 to 236 are Cytoplasmic-facing; sequence CIILVVLRIPSAKGRWK. A helical transmembrane segment spans residues 237–259; it reads TFSTCGSHLTVVAIFYGTLSWVY. At 260–272 the chain is on the extracellular side; the sequence is FRPLSSYSVTKGR. The chain crosses the membrane as a helical span at residues 273-292; that stretch reads IITVVYTVVTPMLNPFIYSL. The Cytoplasmic portion of the chain corresponds to 293-314; it reads RNGDVKGGFMKWMSRMQTFFFR.

The protein belongs to the G-protein coupled receptor 1 family.

The protein localises to the cell membrane. Odorant receptor. The chain is Olfactory receptor 1Q1 (OR1Q1) from Homo sapiens (Human).